The sequence spans 383 residues: D-aspartate oxidase 3 (383 aa).

The N-terminal stretch at 1 to 17 (MLYALLLLFGGVSTVSS) is a signal peptide. Residues K56 and S63 each contribute to the FAD site. Residues N152, N271, and N320 are each glycosylated (N-linked (GlcNAc...) asparagine). T339 contributes to the FAD binding site. Residue N371 is glycosylated (N-linked (GlcNAc...) asparagine).

The protein belongs to the DAMOX/DASOX family. Requires FAD as cofactor. As to expression, in both sexes, present in coelomocytes (at protein level). Expressed in hypodermal cells and the proximal gonadal sheath cells in adult hermaphrodites (at protein level). Also expressed in probable head mesodermal cells and unidentified cells in the head, and vulval muscles in adult hermaphrodites. Expressed in the seminal vesicle, spicule and tail cells in adult males (at protein level).

It is found in the secreted. It catalyses the reaction D-aspartate + O2 + H2O = oxaloacetate + H2O2 + NH4(+). It carries out the reaction D-glutamate + O2 + H2O = H2O2 + 2-oxoglutarate + NH4(+). In terms of biological role, selectively catalyzes the oxidative deamination of acidic amino acids. Plays a role in the egg-laying events and maturation processes of the reproductive organs. This Caenorhabditis elegans protein is D-aspartate oxidase 3 (ddo-3).